The chain runs to 603 residues: Glutathione-regulated potassium-efflux system protein KefB (603 aa).

The next 13 membrane-spanning stretches (helical) occupy residues 4–24, 29–49, 55–75, 87–107, 115–135, 152–172, 177–197, 207–227, 230–250, 268–288, 291–311, 324–344, and 355–375; these read SDFLLAGVLFLFAAVAAVPLA, IGAVLGYLLAGIAIGPWGLGF, EILHFSELGVVFLMFIIGLEL, IFGVGAAQVLLSAALLAGLLM, AAVVGGIGLAMSSTAMALQLM, VLLFQDLAVIPALALVPLLAG, HFDWMKIGMKVLAFVGMLIGG, FIAASGVREVFTAATLLLVLG, LFMDALGLSMALGTFIAGVLL, GLLLGLFFISVGMSLNLGVLY, LLWVVISVVVLVAVKILVLYL, MQFAGVLSQGGEFAFVLFSTA, and MALLLVTVTVTLSMMTTPLLM. In terms of domain architecture, RCK N-terminal spans 402–521; sequence KPQVIVVGFG…AGVTQFSRET (120 aa).

The protein belongs to the monovalent cation:proton antiporter 2 (CPA2) transporter (TC 2.A.37) family. KefB subfamily. In terms of assembly, interacts with the regulatory subunit KefG.

It localises to the cell inner membrane. Its function is as follows. Pore-forming subunit of a potassium efflux system that confers protection against electrophiles. Catalyzes K(+)/H(+) antiport. The sequence is that of Glutathione-regulated potassium-efflux system protein KefB from Shigella boydii serotype 4 (strain Sb227).